A 298-amino-acid polypeptide reads, in one-letter code: Tyrosine recombinase XerD (298 aa).

The Core-binding (CB) domain occupies 3–88 (TLEHPLIDRF…GLRGFYRYCL (86 aa)). A Tyr recombinase domain is found at 109–292 (PLPKSLSEAD…ARARLQDLHA (184 aa)). Catalysis depends on residues arginine 149, lysine 173, histidine 244, arginine 247, and histidine 270. The active-site O-(3'-phospho-DNA)-tyrosine intermediate is tyrosine 279.

Belongs to the 'phage' integrase family. XerD subfamily. Forms a cyclic heterotetrameric complex composed of two molecules of XerC and two molecules of XerD.

The protein localises to the cytoplasm. Functionally, site-specific tyrosine recombinase, which acts by catalyzing the cutting and rejoining of the recombining DNA molecules. The XerC-XerD complex is essential to convert dimers of the bacterial chromosome into monomers to permit their segregation at cell division. It also contributes to the segregational stability of plasmids. This is Tyrosine recombinase XerD from Pseudomonas aeruginosa (strain ATCC 15692 / DSM 22644 / CIP 104116 / JCM 14847 / LMG 12228 / 1C / PRS 101 / PAO1).